Here is a 346-residue protein sequence, read N- to C-terminus: MKRKVYVGMDVHKETIQIAYLTSNSKEILKEQQIKHNEVQIKKFIKKLKLEWNEIHCCYEAGVTGYPLYRYLKSLGVNCILLAPGKIPRQNTDKIKTDKRDAIKLARLMRSWRIGIDSCFPVEEDEAVRDYLRSRDSLRLDLGRNRQRLMKFLLRKDIKLLPTTKYWTVSHYKWLNNLHFNNEILQETFNDYYSRVRVQEENLKAMDKKIQEIAESEPYREKVGILRCFRGVDYLTAMFLLCEVNDFKPIQNGRFVHEFSWTCSWRIFQRFQKKTNRDYVKLEVPRLRRILTEAAWQHRFPGTGSKIITARRSGQPALVVALAEKASLRLHKKFRNLQPKRKKLLK.

It belongs to the transposase IS1111A/IS1328/IS1533 family.

Required for the transposition of the insertion element. The chain is Transposase for insertion sequence element IS1533 (tnhA) from Leptospira borgpetersenii.